A 157-amino-acid polypeptide reads, in one-letter code: MAKASLLILAAIFLGVITPSCLSDNILYSGETLSTGEFLNYGSFVFIMQEDCNLVLYDVDKPIWATNTGGLSRSCFLSMQTDGNLVVYNPSNKPIWASNTGGQNGNYVCILQKDRNVVIYGTDRWATGTHTGLVGIPASPPSEKYPTAGKIKLVTAK.

Positions 1-19 (MAKASLLILAAIFLGVITP) form a signal peptide, or 23; in 70% of the molecules. The Bulb-type lectin domain maps to 24-132 (DNILYSGETL…DRWATGTHTG (109 aa)). Gln-49, Asp-51, Asn-53, Tyr-57, Asp-60, Lys-61, Trp-64, Ala-65, Asn-67, Gln-80, Asp-82, Asn-84, Tyr-88, Ile-95, Trp-96, Asn-99, Asn-106, Gln-112, Asp-114, Asn-116, Tyr-120, and Trp-125 together coordinate alpha-D-mannopyranose. Cys-52 and Cys-75 form a disulfide bridge. Residues 129–157 (THTGLVGIPASPPSEKYPTAGKIKLVTAK) constitute a propeptide, removed in mature form.

As to quaternary structure, homotetramer.

It is found in the secreted. Mannose-specific lectin which binds alpha-D-linked mannose. Displays a high affinity for alpha-(1-3)-mannose oligomers. Displays antiviral activity and therefore may contribute to defense against infections. In Galanthus nivalis (Common snowdrop), this protein is Mannose-specific lectin.